A 396-amino-acid chain; its full sequence is Acetyl-CoA acetyltransferase (396 aa).

The Acyl-thioester intermediate role is filled by cysteine 88. Active-site proton acceptor residues include histidine 352 and cysteine 382.

It belongs to the thiolase-like superfamily. Thiolase family. In terms of assembly, homotetramer.

The catalysed reaction is 2 acetyl-CoA = acetoacetyl-CoA + CoA. The protein operates within biopolymer metabolism; poly-(R)-3-hydroxybutanoate biosynthesis. Functionally, when expressed in E.coli with Synechocystis PhaB, PhaC and PhaE confers the ability to synthesize up to 12% (w/w) poly(3-hydroxybutyrate) (PHB) depending on the carbon source. The protein is Acetyl-CoA acetyltransferase of Synechocystis sp. (strain ATCC 27184 / PCC 6803 / Kazusa).